The primary structure comprises 131 residues: Fumarate reductase subunit C (131 aa).

Transmembrane regions (helical) follow at residues 30-50 (EGTA…LFAL), 57-77 (WMGF…LITL), and 109-129 (IIKG…YVAL).

Belongs to the FrdC family. As to quaternary structure, part of an enzyme complex containing four subunits: a flavoprotein (FrdA), an iron-sulfur protein (FrdB), and two hydrophobic anchor proteins (FrdC and FrdD).

The protein resides in the cell inner membrane. Its function is as follows. Two distinct, membrane-bound, FAD-containing enzymes are responsible for the catalysis of fumarate and succinate interconversion; fumarate reductase is used in anaerobic growth, and succinate dehydrogenase is used in aerobic growth. Anchors the catalytic components of the fumarate reductase complex to the cell inner membrane, binds quinones. This is Fumarate reductase subunit C from Salmonella choleraesuis (strain SC-B67).